We begin with the raw amino-acid sequence, 348 residues long: Protein RecA (348 aa).

Position 64 to 71 (64 to 71) interacts with ATP; that stretch reads GPESSGKT. Residues 324 to 335 are compositionally biased toward basic and acidic residues; that stretch reads EYEIDGSNKEPL. The tract at residues 324–348 is disordered; that stretch reads EYEIDGSNKEPLAETEETLSLLDDE. Residues 336 to 348 show a composition bias toward acidic residues; that stretch reads AETEETLSLLDDE.

This sequence belongs to the RecA family.

The protein resides in the cytoplasm. In terms of biological role, can catalyze the hydrolysis of ATP in the presence of single-stranded DNA, the ATP-dependent uptake of single-stranded DNA by duplex DNA, and the ATP-dependent hybridization of homologous single-stranded DNAs. It interacts with LexA causing its activation and leading to its autocatalytic cleavage. The sequence is that of Protein RecA from Listeria ivanovii.